The primary structure comprises 128 residues: Large ribosomal subunit protein bL12 (128 aa).

The protein belongs to the bacterial ribosomal protein bL12 family. As to quaternary structure, homodimer. Part of the ribosomal stalk of the 50S ribosomal subunit. Forms a multimeric L10(L12)X complex, where L10 forms an elongated spine to which 2 to 4 L12 dimers bind in a sequential fashion. Binds GTP-bound translation factors.

Forms part of the ribosomal stalk which helps the ribosome interact with GTP-bound translation factors. Is thus essential for accurate translation. The sequence is that of Large ribosomal subunit protein bL12 from Corynebacterium glutamicum (strain R).